A 449-amino-acid polypeptide reads, in one-letter code: MSRNYFGTDGIRGRANGLITPELALKVGQAAGLLFQRGEHRHRVVIGKDTRLSGYMIEYAMVAGFTSVGMDVLLVGPMPTPAVAMLTKSMRADLGVMISASHNLFEDNGIKLFGPQGFKLSDDVEKQIEQLLDESLDKKLAQSASLGRARRIDGVHDRYIEFAKRTLPRDLSLDGLRVVVDCANGAAYKVVPEALWELGADVISIGVEPDGFNINKECGSTSPEALCRKVREMRADIGIALDGDADRVILVDERGHIVDGDQLLAVIAQSWKEDGRLSRPGIVATVMSNLGLERFLQGQGLELVRTPVGDRYVLERMLADGYNLGGEQSGHIILSDYATTGDGFVAALQVLATVQKLRRPVSEVCHKFDPLPQILKNVRYRSGKPLDTDAVKSAIDTGQKRLNGHGRLLVRSSGTEPVIRVMGEGDDRNLVEEVVDDIVTAVGNAAAAA.

Serine 101 acts as the Phosphoserine intermediate in catalysis. 4 residues coordinate Mg(2+): serine 101, aspartate 242, aspartate 244, and aspartate 246. Serine 101 is modified (phosphoserine).

This sequence belongs to the phosphohexose mutase family. Requires Mg(2+) as cofactor. Activated by phosphorylation.

It catalyses the reaction alpha-D-glucosamine 1-phosphate = D-glucosamine 6-phosphate. Functionally, catalyzes the conversion of glucosamine-6-phosphate to glucosamine-1-phosphate. The chain is Phosphoglucosamine mutase from Bradyrhizobium sp. (strain ORS 278).